The chain runs to 159 residues: Endoribonuclease YbeY (159 aa).

His119, His123, and His129 together coordinate Zn(2+).

It belongs to the endoribonuclease YbeY family. It depends on Zn(2+) as a cofactor.

Its subcellular location is the cytoplasm. Its function is as follows. Single strand-specific metallo-endoribonuclease involved in late-stage 70S ribosome quality control and in maturation of the 3' terminus of the 16S rRNA. In Acinetobacter baylyi (strain ATCC 33305 / BD413 / ADP1), this protein is Endoribonuclease YbeY.